The following is a 352-amino-acid chain: Heavy metal-associated isoprenylated plant protein 36 (352 aa).

The HMA domain occupies 29–92 (YTTWVLRVSI…KIMKAGRHAE (64 aa)). Residues Cys40 and Cys43 each contribute to the a metal cation site. 3 disordered regions span residues 96 to 150 (TSME…GNFD), 162 to 211 (QLQP…GPPE), and 229 to 252 (PHLH…RHHP). Residues 97–107 (SMENNINNDCN) show a composition bias toward polar residues. A compositionally biased stretch (acidic residues) spans 118 to 128 (ETSGDEDDDEN). A compositionally biased stretch (gly residues) spans 133–148 (NGGGDVGGGGGGGGGN). The span at 172 to 183 (KKKKKKKKKKKS) shows a compositional bias: basic residues. Gly residues predominate over residues 192 to 203 (EGGGGGGGGGGP). Cys349 carries the cysteine methyl ester modification. Cys349 carries the S-farnesyl cysteine lipid modification. The propeptide at 350-352 (CVM) is removed in mature form.

This sequence belongs to the HIPP family.

In terms of biological role, heavy-metal-binding protein. The sequence is that of Heavy metal-associated isoprenylated plant protein 36 from Arabidopsis thaliana (Mouse-ear cress).